We begin with the raw amino-acid sequence, 274 residues long: Large ribosomal subunit protein uL2cz/uL2cy (274 aa).

Disordered regions lie at residues 1–21 (MAIHLYKTSTPGTRNGAVDSQ) and 225–274 (PVDH…RRSK).

The protein belongs to the universal ribosomal protein uL2 family. As to quaternary structure, part of the 50S ribosomal subunit.

The protein localises to the plastid. Its subcellular location is the chloroplast. The protein is Large ribosomal subunit protein uL2cz/uL2cy (rpl2-A) of Gossypium barbadense (Sea Island cotton).